Consider the following 876-residue polypeptide: Ergothioneine biosynthesis protein 1 (876 aa).

Positions 36-350 are L-histidine N(alpha)-methyltransferase; the sequence is IIDIRRVAVE…TYGNEYGLHL (315 aa). Residue tyrosine 88 coordinates L-histidine. The S-adenosyl-L-methionine site is built by glycine 119, lysine 125, and aspartate 146. L-histidine is bound by residues asparagine 202, tyrosine 242, and 315–317; that span reads EQS. Residues 378–874 form a hercynylcysteine S-oxide synthase region; the sequence is ALWATWDVVT…YAWVGARVVR (497 aa). Histidine 413, histidine 506, and histidine 510 together coordinate Fe cation. 2 disordered regions span residues 631-650 and 732-761; these read GTTN…QQLP and TNNG…SNTT. Over residues 744 to 758 the composition is skewed to low complexity; the sequence is PSSETPAESSSPSDS.

In the N-terminal section; belongs to the methyltransferase superfamily. EgtD family. This sequence in the C-terminal section; belongs to the EgtB family. Fe(2+) is required as a cofactor.

It localises to the cytoplasm. The protein localises to the nucleus. It catalyses the reaction L-histidine + 3 S-adenosyl-L-methionine = hercynine + 3 S-adenosyl-L-homocysteine + 3 H(+). The enzyme catalyses hercynine + L-cysteine + O2 = S-(hercyn-2-yl)-L-cysteine S-oxide + H2O. The protein operates within amino-acid biosynthesis; ergothioneine biosynthesis. Functionally, catalyzes the SAM-dependent triple methylation of the alpha-amino group of histidine to form hercynine and subsequent conjugation with cysteine and oxygen to form hercynylcysteine sulfoxide, the first two steps in the biosynthesis pathway of ergothioneine. Ergothioneine is an unusual thio-histidine betaine amino acid that acts as an antioxidant against peroxide in conidia and contributes to conidial longevity. This chain is Ergothioneine biosynthesis protein 1, found in Neurospora crassa (strain ATCC 24698 / 74-OR23-1A / CBS 708.71 / DSM 1257 / FGSC 987).